A 240-amino-acid chain; its full sequence is Ribonuclease HII (240 aa).

Residues 27-226 (GPVAGVDEAG…GETRSLRLED (200 aa)) enclose the RNase H type-2 domain. A divalent metal cation is bound by residues D33, E34, and D127.

Belongs to the RNase HII family. Mn(2+) is required as a cofactor. It depends on Mg(2+) as a cofactor.

It localises to the cytoplasm. The catalysed reaction is Endonucleolytic cleavage to 5'-phosphomonoester.. In terms of biological role, endonuclease that specifically degrades the RNA of RNA-DNA hybrids. This Parafrankia sp. (strain EAN1pec) protein is Ribonuclease HII.